We begin with the raw amino-acid sequence, 471 residues long: Glutamate--tRNA ligase (471 aa).

The 'HIGH' region signature appears at 9–19 (PSPTGYLHVGG). 4 residues coordinate Zn(2+): Cys98, Cys100, Cys125, and His127. Residues 237–241 (KLSKR) carry the 'KMSKS' region motif. Lys240 provides a ligand contact to ATP.

Belongs to the class-I aminoacyl-tRNA synthetase family. Glutamate--tRNA ligase type 1 subfamily. As to quaternary structure, monomer. Requires Zn(2+) as cofactor.

It is found in the cytoplasm. It catalyses the reaction tRNA(Glu) + L-glutamate + ATP = L-glutamyl-tRNA(Glu) + AMP + diphosphate. Functionally, catalyzes the attachment of glutamate to tRNA(Glu) in a two-step reaction: glutamate is first activated by ATP to form Glu-AMP and then transferred to the acceptor end of tRNA(Glu). The polypeptide is Glutamate--tRNA ligase (Enterobacter sp. (strain 638)).